We begin with the raw amino-acid sequence, 458 residues long: Probable plasmid replicative DNA helicase (458 aa).

The SF4 helicase domain maps to 194–458 (KIDYVDGLPT…GKFTIQKEAW (265 aa)). Residue 225 to 232 (ARPAMGKT) coordinates ATP.

Belongs to the helicase family. DnaB subfamily. Homohexamer.

It carries out the reaction Couples ATP hydrolysis with the unwinding of duplex DNA at the replication fork by translocating in the 5'-3' direction. This creates two antiparallel DNA single strands (ssDNA). The leading ssDNA polymer is the template for DNA polymerase III holoenzyme which synthesizes a continuous strand.. The enzyme catalyses ATP + H2O = ADP + phosphate + H(+). In terms of biological role, a replicative DNA helicase, it participates in initiation and elongation during DNA replication. Travels ahead of the DNA replisome, separating dsDNA into templates for DNA synthesis. A processive ATP-dependent 5'-3' DNA helicase it has DNA-dependent ATPase activity. The chain is Probable plasmid replicative DNA helicase from Chlamydia psittaci (Chlamydophila psittaci).